The sequence spans 372 residues: Cytochrome b (372 aa).

4 helical membrane-spanning segments follow: residues 25–45, 69–90, 105–125, and 170–190; these read FGSMLLTCLMMQIMTGFFLAI, WIMQNIHAIGASVFFICIYIHI, WFSGTALLITLMATAFFGYVL, and FFALHFILPFTIASLSSIHII. Residues His-75 and His-89 each coordinate heme b. Heme b-binding residues include His-174 and His-188. A ubiquinone is bound at residue His-193. A run of 4 helical transmembrane segments spans residues 218-238, 280-300, 312-332, and 339-358; these read YKDMLMTTSMFMLMFMILSFM, LGGTLALLMSVTILITAPFTH, LAQTLFWTLIATFITITWTAT, and FILISQMASVFYFSFFIMNP.

This sequence belongs to the cytochrome b family. The cytochrome bc1 complex contains 3 respiratory subunits (MT-CYB, CYC1 and UQCRFS1), 2 core proteins (UQCRC1 and UQCRC2) and probably 6 low-molecular weight proteins. Heme b is required as a cofactor.

The protein localises to the mitochondrion inner membrane. In terms of biological role, component of the ubiquinol-cytochrome c reductase complex (complex III or cytochrome b-c1 complex) that is part of the mitochondrial respiratory chain. The b-c1 complex mediates electron transfer from ubiquinol to cytochrome c. Contributes to the generation of a proton gradient across the mitochondrial membrane that is then used for ATP synthesis. The polypeptide is Cytochrome b (MT-CYB) (Sinomicrurus japonicus (Coral snake)).